The sequence spans 123 residues: MPPKPSAKGAKKAAKTVVAKPKDGKKRRHARKESYSVYIYRVLKQVHPDTGVSSKAMSIMNSFVNDVFERIASEASRLAHYNKRSTISSREIQTAVRLILPGELAKHAVSEGTKAVTKYTSSK.

The disordered stretch occupies residues 1 to 30 (MPPKPSAKGAKKAAKTVVAKPKDGKKRRHA). A glycan (O-linked (GlcNAc) serine) is linked at Ser-110. Residue Lys-118 forms a Glycyl lysine isopeptide (Lys-Gly) (interchain with G-Cter in ubiquitin) linkage.

It belongs to the histone H2B family. The nucleosome is a histone octamer containing two molecules each of H2A, H2B, H3 and H4 assembled in one H3-H4 heterotetramer and two H2A-H2B heterodimers. The octamer wraps approximately 147 bp of DNA. Post-translationally, monoubiquitination of Lys-118 gives a specific tag for epigenetic transcriptional activation and is also prerequisite for histone H3 'Lys-4' and 'Lys-79' methylation. In terms of processing, glcNAcylation at Ser-110 promotes monoubiquitination of Lys-118. It fluctuates in response to extracellular glucose, and associates with transcribed genes.

The protein resides in the nucleus. It localises to the chromosome. Core component of nucleosome. Nucleosomes wrap and compact DNA into chromatin, limiting DNA accessibility to the cellular machineries which require DNA as a template. Histones thereby play a central role in transcription regulation, DNA repair, DNA replication and chromosomal stability. DNA accessibility is regulated via a complex set of post-translational modifications of histones, also called histone code, and nucleosome remodeling. This Caenorhabditis elegans protein is Probable histone H2B 4 (his-48).